Reading from the N-terminus, the 438-residue chain is Delta(14)-sterol reductase ERG24 (438 aa).

Residues 1 to 13 (MVSALNPRTTEFE) are Lumenal-facing. A helical membrane pass occupies residues 14–34 (FGGLIGALGISIGLPVFTIIL). Topologically, residues 35 to 71 (NQMIRPDYFIKGFFQNFDIVELWNGIKPLRYYLGNRE) are cytoplasmic. The chain crosses the membrane as a helical span at residues 72-90 (LWTVYCLWYGILAVLDVIL). Topologically, residues 91 to 109 (PGRVMKGVQLRDGSKLSYK) are lumenal. The chain crosses the membrane as a helical span at residues 110–127 (INGIAMSTTLVLVLAIRW). The Cytoplasmic portion of the chain corresponds to 128 to 147 (KLTDGQLPELQYLYENHVSL). Residues 148–172 (CIISILFSFFLATYCYVASFIPLIF) traverse the membrane as a helical segment. The Lumenal portion of the chain corresponds to 173 to 242 (KKNGNGKREK…LHHHYLKTGK (70 aa)). A helical transmembrane segment spans residues 243 to 263 (INDALVLVNFLQGFYIFDGVL). The Cytoplasmic segment spans residues 264–308 (NEEGVLTMMDITTDGFGFMLAFGDLSLVPFTYSLQARYLSVSPVE). Residues 309 to 328 (LGWVKVVGILAIMFLGFHIF) traverse the membrane as a helical segment. At 329–368 (HSANKQKSEFRQGKLENLKSIQTKRGTKLLCDGWWAKSQH) the chain is on the lumenal side. NADP(+) contacts are provided by residues K335, R339, L358, W363, 370–371 (NY), D410, 414–418 (CRLKY), and Y425. The chain crosses the membrane as a helical span at residues 369–387 (INYFGDWLISLSWCLATWF). Residues 388 to 438 (QTPLTYYYSLYFATLLLHRQQRDEHKCRLKYGENWEEYERKVPYKIIPYVY) are Cytoplasmic-facing.

This sequence belongs to the ERG4/ERG24 family.

It is found in the membrane. The enzyme catalyses 4,4-dimethyl-5alpha-cholesta-8,24-dien-3beta-ol + NADP(+) = 4,4-dimethyl-5alpha-cholesta-8,14,24-trien-3beta-ol + NADPH + H(+). The protein operates within steroid biosynthesis; zymosterol biosynthesis; zymosterol from lanosterol: step 2/6. Its activity is regulated as follows. Inhibited by the morpholine antifungal drug fenpropimorph. Functionally, delta(14)-sterol reductase; part of the third module of ergosterol biosynthesis pathway that includes the late steps of the pathway. ERG24 reduces the C14=C15 double bond of 4,4-dimethyl-cholesta-8,14,24-trienol to produce 4,4-dimethyl-cholesta-8,24-dienol. The third module or late pathway involves the ergosterol synthesis itself through consecutive reactions that mainly occur in the endoplasmic reticulum (ER) membrane. Firstly, the squalene synthase ERG9 catalyzes the condensation of 2 farnesyl pyrophosphate moieties to form squalene, which is the precursor of all steroids. Squalene synthase is crucial for balancing the incorporation of farnesyl diphosphate (FPP) into sterol and nonsterol isoprene synthesis. Secondly, the squalene epoxidase ERG1 catalyzes the stereospecific oxidation of squalene to (S)-2,3-epoxysqualene, which is considered to be a rate-limiting enzyme in steroid biosynthesis. Then, the lanosterol synthase ERG7 catalyzes the cyclization of (S)-2,3 oxidosqualene to lanosterol, a reaction that forms the sterol core. In the next steps, lanosterol is transformed to zymosterol through a complex process involving various demethylation, reduction and desaturation reactions. The lanosterol 14-alpha-demethylase ERG11 (also known as CYP51) catalyzes C14-demethylation of lanosterol to produce 4,4'-dimethyl cholesta-8,14,24-triene-3-beta-ol, which is critical for ergosterol biosynthesis. The C-14 reductase ERG24 reduces the C14=C15 double bond of 4,4-dimethyl-cholesta-8,14,24-trienol to produce 4,4-dimethyl-cholesta-8,24-dienol. 4,4-dimethyl-cholesta-8,24-dienol is substrate of the C-4 demethylation complex ERG25-ERG26-ERG27 in which ERG25 catalyzes the three-step monooxygenation required for the demethylation of 4,4-dimethyl and 4alpha-methylsterols, ERG26 catalyzes the oxidative decarboxylation that results in a reduction of the 3-beta-hydroxy group at the C-3 carbon to an oxo group, and ERG27 is responsible for the reduction of the keto group on the C-3. ERG28 has a role as a scaffold to help anchor ERG25, ERG26 and ERG27 to the endoplasmic reticulum and ERG29 regulates the activity of the iron-containing C4-methylsterol oxidase ERG25. Then, the sterol 24-C-methyltransferase ERG6 catalyzes the methyl transfer from S-adenosyl-methionine to the C-24 of zymosterol to form fecosterol. The C-8 sterol isomerase ERG2 catalyzes the reaction which results in unsaturation at C-7 in the B ring of sterols and thus converts fecosterol to episterol. The sterol-C5-desaturase ERG3 then catalyzes the introduction of a C-5 double bond in the B ring to produce 5-dehydroepisterol. The C-22 sterol desaturase ERG5 further converts 5-dehydroepisterol into ergosta-5,7,22,24(28)-tetraen-3beta-ol by forming the C-22(23) double bond in the sterol side chain. Finally, ergosta-5,7,22,24(28)-tetraen-3beta-ol is substrate of the C-24(28) sterol reductase ERG4 to produce ergosterol. This is Delta(14)-sterol reductase ERG24 from Saccharomyces cerevisiae (strain ATCC 204508 / S288c) (Baker's yeast).